A 79-amino-acid polypeptide reads, in one-letter code: MKTLLLTLVVVTIVCLDLGYTLICYSSSMNKDSKTCQKWETVCFQEAFKPHSSGMIILRGCASSCPKGYTCCATDLCNW.

Positions 1 to 21 are cleaved as a signal peptide; sequence MKTLLLTLVVVTIVCLDLGYT. Intrachain disulfides connect Cys-24/Cys-43, Cys-36/Cys-61, Cys-65/Cys-71, and Cys-72/Cys-77.

In terms of tissue distribution, expressed by the venom gland.

Its subcellular location is the secreted. Blocks both the muscle-twitch response to nerve stimulation and the response to exogenous acetylcholine. The sequence is that of Neurotoxin 3FTx-LI from Bungarus fasciatus (Banded krait).